The following is a 308-amino-acid chain: Protoheme IX farnesyltransferase (308 aa).

The next 8 helical transmembrane spans lie at 20–40 (LLAY…VTAI), 50–70 (AIHP…AAGA), 102–122 (NALA…WCAT), 124–144 (LLAG…YTLW), 149–169 (TSQN…IGWS), 170–190 (AITG…FFWT), 227–249 (LIYT…WLYG), and 288–308 (YLAV…PTLH).

This sequence belongs to the UbiA prenyltransferase family. Protoheme IX farnesyltransferase subfamily.

It is found in the cell membrane. The enzyme catalyses heme b + (2E,6E)-farnesyl diphosphate + H2O = Fe(II)-heme o + diphosphate. It functions in the pathway porphyrin-containing compound metabolism; heme O biosynthesis; heme O from protoheme: step 1/1. Its function is as follows. Converts heme B (protoheme IX) to heme O by substitution of the vinyl group on carbon 2 of heme B porphyrin ring with a hydroxyethyl farnesyl side group. The sequence is that of Protoheme IX farnesyltransferase from Mycobacterium tuberculosis (strain ATCC 25618 / H37Rv).